The chain runs to 350 residues: 2-oxoisovalerate dehydrogenase subunit beta (350 aa).

In terms of assembly, heterodimer of an alpha and a beta chain. Requires thiamine diphosphate as cofactor.

The catalysed reaction is N(6)-[(R)-lipoyl]-L-lysyl-[protein] + 3-methyl-2-oxobutanoate + H(+) = N(6)-[(R)-S(8)-2-methylpropanoyldihydrolipoyl]-L-lysyl-[protein] + CO2. Functionally, the branched-chain alpha-keto dehydrogenase complex catalyzes the overall conversion of alpha-keto acids to acyl-CoA and CO(2). It contains multiple copies of three enzymatic components: branched-chain alpha-keto acid decarboxylase (E1), lipoamide acyltransferase (E2) and lipoamide dehydrogenase (E3). This Pseudomonas aeruginosa (strain ATCC 15692 / DSM 22644 / CIP 104116 / JCM 14847 / LMG 12228 / 1C / PRS 101 / PAO1) protein is 2-oxoisovalerate dehydrogenase subunit beta (bkdA2).